The primary structure comprises 127 residues: Aspartate 1-decarboxylase (127 aa).

Residue S25 is the Schiff-base intermediate with substrate; via pyruvic acid of the active site. Residue S25 is modified to Pyruvic acid (Ser). A substrate-binding site is contributed by T57. Catalysis depends on Y58, which acts as the Proton donor. 73 to 75 (GAA) is a binding site for substrate.

It belongs to the PanD family. As to quaternary structure, heterooctamer of four alpha and four beta subunits. The cofactor is pyruvate. In terms of processing, is synthesized initially as an inactive proenzyme, which is activated by self-cleavage at a specific serine bond to produce a beta-subunit with a hydroxyl group at its C-terminus and an alpha-subunit with a pyruvoyl group at its N-terminus.

The protein localises to the cytoplasm. It catalyses the reaction L-aspartate + H(+) = beta-alanine + CO2. The protein operates within cofactor biosynthesis; (R)-pantothenate biosynthesis; beta-alanine from L-aspartate: step 1/1. Functionally, catalyzes the pyruvoyl-dependent decarboxylation of aspartate to produce beta-alanine. The protein is Aspartate 1-decarboxylase of Listeria monocytogenes serotype 4b (strain F2365).